A 565-amino-acid polypeptide reads, in one-letter code: NAD-dependent malic enzyme (565 aa).

Tyr-104 functions as the Proton donor in the catalytic mechanism. An NAD(+)-binding site is contributed by Arg-157. Lys-175 serves as the catalytic Proton acceptor. A divalent metal cation-binding residues include Glu-246, Asp-247, and Asp-270. NAD(+)-binding residues include Asp-270 and Asn-418.

Belongs to the malic enzymes family. In terms of assembly, homotetramer. Requires Mg(2+) as cofactor. Mn(2+) serves as cofactor.

It carries out the reaction (S)-malate + NAD(+) = pyruvate + CO2 + NADH. The catalysed reaction is oxaloacetate + H(+) = pyruvate + CO2. The protein is NAD-dependent malic enzyme of Escherichia coli O157:H7.